A 762-amino-acid polypeptide reads, in one-letter code: MTNVKTSSLGFPRIGLNREWKKSLEAYWKGNTDRETFLKEMDEQFLAALQTQLDQQIDIIPVSDFTMYDHVLDTAVMFNWIPDRFKDINDPLDTYFAMARGTKDAVSSEMTKWFNTNYHYIVPEYEKGAQYRVTRNKPLQDYQRAKAALGTETKPVILGLYTFVALAKGYEQQDIKDIYNQMTPLYIQVLKELEQEGVKWVQIDEPALVTASPEEAAAVKEIYQTITEEVSELNILLQTYFDSVDAYEELISFPVAGIGLDFVHDKGKNFEHLKAHGFPKDKVLAAGILDGRNIWKANLEERLDLTLELIQRAGVDEVWIQPSNSLLHVPVAKHPGEHLADDLLNGLSFAKEKLLELTLLKNGLVSGKAAIQAEIDEAHGHLQDLKQYGAATNSAFAEERGKLTEEDFKRPTAFEERLRIQNDSLGLPLLPTTTIGSFPQTADVRSARQKWRKKEWSDEQYEAFIQEETKKWIDIQEDLGLDVLVHGEFERTDMVEYFGEKLGGFAFTKYAWVQSYGSRCVRPPVIYGDVEFKEPMTVKETVYAQSLTSKKVKGMLTGPVTILNWSFARYDLPRKEIAFQIACALRKEVEALEKAGIQIIQVDEPALREGLPLKERDWDEYLKWAAEAFRLSTSSVEDTTQIHTHMCYSNFEDIVDAIEDLDADVITIEHSRSHGGFLDYLEQHPYLKGLGLGVYDIHSPRVPSSDEMLTIIEDALKVCPADRFWVNPDCGLKTRQPEETIAALKNMVEAAKQARGKLAQTV.

Residues 18-21 (REWK) and Lys112 each bind 5-methyltetrahydropteroyltri-L-glutamate. Residues 435 to 437 (IGS) and Glu488 each bind L-homocysteine. L-methionine-binding positions include 435–437 (IGS) and Glu488. 5-methyltetrahydropteroyltri-L-glutamate contacts are provided by residues 519 to 520 (RC) and Trp565. Residue Asp603 participates in L-homocysteine binding. Asp603 is an L-methionine binding site. Glu609 contributes to the 5-methyltetrahydropteroyltri-L-glutamate binding site. The Zn(2+) site is built by His645, Cys647, and Glu669. Residue His698 is the Proton donor of the active site. Cys730 provides a ligand contact to Zn(2+).

It belongs to the vitamin-B12 independent methionine synthase family. Requires Zn(2+) as cofactor.

The enzyme catalyses 5-methyltetrahydropteroyltri-L-glutamate + L-homocysteine = tetrahydropteroyltri-L-glutamate + L-methionine. It participates in amino-acid biosynthesis; L-methionine biosynthesis via de novo pathway; L-methionine from L-homocysteine (MetE route): step 1/1. Its function is as follows. Catalyzes the transfer of a methyl group from 5-methyltetrahydrofolate to homocysteine resulting in methionine formation. This chain is 5-methyltetrahydropteroyltriglutamate--homocysteine methyltransferase, found in Bacillus licheniformis (strain ATCC 14580 / DSM 13 / JCM 2505 / CCUG 7422 / NBRC 12200 / NCIMB 9375 / NCTC 10341 / NRRL NRS-1264 / Gibson 46).